The primary structure comprises 1881 residues: Ankyrin-1 (1881 aa).

Residues Met-1–Phe-827 form an 89 kDa domain region. ANK repeat units lie at residues Asn-44–Thr-73, Lys-77–Ala-106, Lys-110–Val-139, Asp-143–Val-172, Leu-174–Val-201, Thr-205–Phe-234, Asn-238–Thr-267, Asp-271–Ala-300, Asn-304–Asp-333, Asp-337–Ser-366, Asn-370–Ala-399, Ser-403–Val-432, Lys-436–Ala-465, Asp-469–Leu-498, Ala-502–Cys-531, Lys-535–Ala-564, Asn-568–Ser-597, Asn-601–Ala-630, Gln-634–Leu-663, Ser-667–Ala-696, Met-700–Ala-729, Leu-733–Glu-762, and Asp-766–Phe-795. At Asn-105 the chain carries (3S)-3-hydroxyasparagine; by HIF1AN; partial. A (3S)-3-hydroxyasparagine; by HIF1AN; partial modification is found at Asn-233. Phosphoserine is present on Ser-429. A (3S)-3-hydroxyasparagine; by HIF1AN; partial mark is found at Asn-431 and Asn-464. Residues Asn-629 and Asn-662 each carry the (3S)-3-hydroxyasparagine; by HIF1AN; partial modification. Residue Asp-695 is modified to (3S)-3-hydroxyaspartate; by HIF1AN; partial. The residue at position 728 (Asn-728) is a (3S)-3-hydroxyasparagine; by HIF1AN; partial. Ser-759 carries the phosphoserine modification. The residue at position 761 (Asn-761) is a (3S)-3-hydroxyasparagine; by HIF1AN; partial. Ser-781, Ser-817, Ser-834, and Ser-856 each carry phosphoserine. The segment at Glu-875–Pro-904 is disordered. A compositionally biased stretch (polar residues) spans Ile-890–Pro-904. ZU5 domains follow at residues Phe-913–Arg-1068 and Cys-1070–Cys-1216. Phosphothreonine is present on Thr-961. Position 1073 is a phosphotyrosine (Tyr-1073). Position 1082 is a phosphoserine (Ser-1082). The interval Thr-1234–Thr-1362 is UPA domain. A phosphothreonine mark is found at Thr-1378 and Thr-1380. The 55 kDa regulatory domain stretch occupies residues Ala-1383–Pro-1881. Residues Ser-1390, Ser-1392, and Ser-1396 each carry the phosphoserine modification. Thr-1400 bears the Phosphothreonine mark. In terms of domain architecture, Death spans Ala-1403–Gly-1487. Phosphoserine is present on residues Ser-1428 and Ser-1486. Residues Ser-1486–Gln-1510 form a disordered region. Positions Leu-1493–Tyr-1504 are enriched in basic and acidic residues. Phosphoserine is present on residues Ser-1523 and Ser-1533. A disordered region spans residues Ser-1583–Pro-1613. The span at Ser-1588 to Gly-1612 shows a compositional bias: basic and acidic residues. Residue Ser-1617 is modified to Phosphoserine. Disordered stretches follow at residues Leu-1637–Trp-1703, Gln-1718–Asn-1791, and Ala-1840–Ser-1859. The segment covering Glu-1642 to Asp-1658 has biased composition (basic and acidic residues). Phosphoserine is present on residues Ser-1666, Ser-1671, Ser-1686, Ser-1690, and Ser-1696. The segment covering Ile-1683 to Glu-1694 has biased composition (polar residues). 2 stretches are compositionally biased toward polar residues: residues Gln-1718–Thr-1739 and Ser-1758–Ser-1771. Positions Gln-1772 to Gly-1781 are enriched in basic and acidic residues.

In terms of assembly, component of the ankyrin-1 complex in the erythrocyte, composed of ANK1, RHCE, RHAG, SLC4A1, EPB42, GYPA, GYPB and AQP1. Interacts with a number of integral membrane proteins and cytoskeletal proteins. Interacts (via N-terminus) with SPTB/spectrin (beta chain). Also interacts with TTN/titin. Isoform Mu17 interacts with OBSCN isoform 3/obscurin. Interacts with HIF1AN. Interacts (via ANK 1-5 repeats) with RHCE; this interaction mediates the primary membrane attachment site for ANK1. Interacts (via ANK 1-2 repeats) with AQP1 (via the N-terminal). Interacts (via ANK 1-13 repeats) with EPB42. Interacts directly with SLC4A1 (via the cytoplasmic domain); this interaction is mediated by the SLC4A1 Band 3-II and Band 3-III dimers. Post-translationally, regulated by phosphorylation. Palmitoylated. In terms of processing, hydroxylated by HIF1AN at several asparagine and 1 aspartate residue within ANK repeat region. Hydroxylation seems to increase the conformational stability of this region and may also modulate protein-protein interactions mediated by the ANK repeat region. Post-translationally, (Microbial infection) Probably cleaved by P.falciparum SERA6; the cleavage probably causes the disruption of the actin cytoskeleton and the rupture of the erythrocyte cell membrane releasing the merozoites. In terms of tissue distribution, isoform Mu17, isoform Mu18, isoform Mu19 and isoform Mu20 are expressed in skeletal muscle. Isoform Br21 is expressed in brain.

The protein localises to the cytoplasm. The protein resides in the cytoskeleton. It is found in the membrane. Its subcellular location is the myofibril. It localises to the sarcomere. The protein localises to the m line. The protein resides in the sarcoplasmic reticulum. In terms of biological role, component of the ankyrin-1 complex, a multiprotein complex involved in the stability and shape of the erythrocyte membrane. Attaches integral membrane proteins to cytoskeletal elements; binds to the erythrocyte membrane protein band 4.2, to Na-K ATPase, to the lymphocyte membrane protein GP85, and to the cytoskeletal proteins fodrin, tubulin, vimentin and desmin. Erythrocyte ankyrins also link spectrin (beta chain) to the cytoplasmic domain of the erythrocytes anion exchange protein; they retain most or all of these binding functions. Functionally, together with obscurin in skeletal muscle may provide a molecular link between the sarcoplasmic reticulum and myofibrils. This is Ankyrin-1 from Homo sapiens (Human).